Consider the following 1087-residue polypeptide: Platelet-derived growth factor receptor alpha (1087 aa).

The first 24 residues, 1-24, serve as a signal peptide directing secretion; sequence MMPAMRASLILGCLLIIGPWAILA. Over 25–530 the chain is Extracellular; the sequence is ENPLPTIFPD…PTLRSELTVA (506 aa). 2 consecutive Ig-like C2-type domains span residues 27–114 and 118–211; these read PLPT…SEIE and IYIY…LQTW. Residues C50 and C101 are joined by a disulfide bond. Residues N77 and N104 are each glycosylated (N-linked (GlcNAc...) asparagine). C151 and C192 are joined by a disulfide. Residues N216, N282, N309, N356, N362, N461, and N471 are each glycosylated (N-linked (GlcNAc...) asparagine). Ig-like C2-type domains are found at residues 217–309, 315–409, and 417–519; these read ISVE…KKTN, KGFI…KSYS, and PALI…LKLV. C238 and C293 are joined by a disulfide. C438 and C503 form a disulfide bridge. The helical transmembrane segment at 531–551 threads the bilayer; the sequence is AAVLVLLVIVIISLIVLVIIW. At 552-1087 the chain is on the cytoplasmic side; it reads KQKPRYEIRW…SSDLVEDSFL (536 aa). Residues Y574 and Y576 each carry the phosphotyrosine; by autocatalysis modification. The Protein kinase domain maps to 595 to 970; that stretch reads LVLGRILGSG…CYETVLHDFL (376 aa). Residues 601-609 and K629 contribute to the ATP site; that span reads LGSGAFGKV. 5 positions are modified to phosphotyrosine; by autocatalysis: Y722, Y733, Y744, Y756, and Y764. Residue D818 is the Proton acceptor of the active site. A phosphotyrosine; by autocatalysis mark is found at Y849, Y988, and Y1017. A disordered region spans residues 1017–1064; that stretch reads YIIPLPDIDPVSEDESGKRNRHSSQTSEESAIETGSSSSTFIKRDDET. Residues 1039–1057 show a composition bias toward polar residues; it reads SSQTSEESAIETGSSSSTF.

It belongs to the protein kinase superfamily. Tyr protein kinase family. CSF-1/PDGF receptor subfamily. In terms of assembly, interacts with homodimeric pdgfa, pdgfb and pdgfc, and with heterodimers formed by pdgfa and pdgfb. Monomer in the absence of bound ligand. Interaction with dimeric pdgfa, pdgfb and/or pdgfc leads to receptor dimerization, where both pdgfra homodimers and heterodimers with pdgfrb are observed. Post-translationally, ubiquitinated, leading to its internalization and degradation. Autophosphorylated on tyrosine residues upon ligand binding. Autophosphorylation occurs in trans, i.e. one subunit of the dimeric receptor phosphorylates tyrosine residues on the other subunit.

The protein resides in the cell membrane. Its subcellular location is the cell projection. It is found in the cilium. The protein localises to the golgi apparatus. The enzyme catalyses L-tyrosyl-[protein] + ATP = O-phospho-L-tyrosyl-[protein] + ADP + H(+). Its activity is regulated as follows. Present in an inactive conformation in the absence of bound ligand. Binding of pdgfa and/or pdgfb leads to dimerization and activation by autophosphorylation on tyrosine residues. Its function is as follows. Tyrosine-protein kinase that acts as a cell-surface receptor for pdgfa, pdgfb and pdgfc and plays an essential role in the regulation of embryonic development, cell proliferation, survival and chemotaxis. Depending on the context, promotes or inhibits cell proliferation and cell migration. Plays an important role in the differentiation of bone marrow-derived mesenchymal stem cells. Required for normal skeleton development. Required for normal development of the gastrointestinal tract. Plays a role in cell migration and chemotaxis in wound healing. Plays a role in platelet activation, secretion of agonists from platelet granules, and in thrombin-induced platelet aggregation. Binding of its cognate ligands - homodimeric pdgfa, homodimeric pdgfb, heterodimers formed by pdgfa and pdgfb or homodimeric pdgfc -leads to the activation of several signaling cascades; the response depends on the nature of the bound ligand and is modulated by the formation of heterodimers between pdgfra and pdgfrb. Phosphorylates pik3r1, plcg1, and ptpn11. Activation of plcg1 leads to the production of the cellular signaling molecules diacylglycerol and inositol 1,4,5-trisphosphate, mobilization of cytosolic Ca(2+) and the activation of protein kinase C. Phosphorylates pik3r1, the regulatory subunit of phosphatidylinositol 3-kinase, and thereby mediates activation of the akt1 signaling pathway. Mediates activation of hras and of the MAP kinases mapk1/erk2 and/or mapk3/erk1. Promotes activation of stat family members stat1, stat3 and stat5a and/or stat5b. Receptor signaling is down-regulated by protein phosphatases that dephosphorylate the receptor and its down-stream effectors, and by rapid internalization of the activated receptor. This Xenopus laevis (African clawed frog) protein is Platelet-derived growth factor receptor alpha (pdgfra).